Reading from the N-terminus, the 464-residue chain is MTEQKSKKLWGGRFSEAMAASVEKFSESISYDVRLYKYDIAGSKAHATMLSSQGIISPEELEQIIAGLSSIEADIEAGVFEFKTEYEDVHMNIEQALVDRIGAAGSRLHAARSRNDQIALDFKMYLRDQCDHLVELLDGACRAFTVVGRKYLGDIMPGYTHTQRAQPVLITHHMLAYYEMFRRDRDRILDCRKRLNLSPLGCAAMAGTGLPINREQVAKALGFAGVTANSMDTSADRDYAIELTSCLTMIQLHLSRLAEELVTWSTSEYKFVDISDSFCTGSSIMPQKKNPDIAELIRGKSGRVVGSLISLITMMKGLPLTYNRDQQEDKEPVFDAIDTVSASLSITAEMMAHMKFNTARCAEATETGFITATDLADYLVMKDVPFRQAHHIVGSAVAACIAKGCELPDLTLTEMQEFSPVIESDVFAVLTAEGSVNSRVSTGGTGLVRVTEALTLAEKCVGIA.

The protein belongs to the lyase 1 family. Argininosuccinate lyase subfamily.

Its subcellular location is the cytoplasm. It carries out the reaction 2-(N(omega)-L-arginino)succinate = fumarate + L-arginine. It participates in amino-acid biosynthesis; L-arginine biosynthesis; L-arginine from L-ornithine and carbamoyl phosphate: step 3/3. The chain is Argininosuccinate lyase from Desulfotalea psychrophila (strain LSv54 / DSM 12343).